The primary structure comprises 715 residues: MADPETAAKFKSKNAFPDPLNDPKCNPKSLVKKYLTPKVFESLKNKKTKLGITLWDCINSGVVNLDSGVGVYAGDEESYTLFGPLFDAIIEDYHSPYKLATGHNSDMNPAHVKAPDLDPANRYIRSTRIRVARSLKGYGLAPGVTKAHRLEIEKKVVGVLTSLTGDLAGKYYPLSGMDEKTRQQLVDDHFLFKKGDRFLEAAGINKEWPEGRGIYHNNDKTFLVWLNEEDHLRIISMEKGSDIGSVFSRLCRAVNEIDKKLGFQHTKKHGYLTSCPSNLGTGMRASVHVKIPHAKEHPDFENILTKYHIQARGIHGEHSESTGEDAGVYDISNRRRLGLSEVQCVQDMYDGVKALMELEKEAIAKKRSVFPEVLKNPEVKSLLRKYLTPELFDSLKDKKTAKGISLYDCINSGVENLDSSCGVYAGDEECYTLFAPLFDKIVEDYHSPYKLANKHTSDMNPEKVDAPNLDPEGTYIRSTRIRVARNVKGYALTPGLTRNERLDIERKVVGVLSSLTGDLAGQYYPLTGMDEATRQKLVNDHFLFKKGDRFLEAAGVNKLWPEGRGIFHNNDKTFLVWINEEDQLRIISMEKGSDIGSVFGRLCRAVNEIDKQLGFQHTDAHGYLSGCPTNLGTGMRASVHVKIPKASAHPDFQKICDEFHIQARGIHGEHSVSTGEDAGVFDISNRRRLGLSEVQCVQDMYNGVKKLLEIEKSTK.

2 Approximate repeats span residues 1-366 and 367-715; these read MADP…IAKK and RSVF…KSTK. The Phosphagen kinase N-terminal 1 domain occupies 11–95; the sequence is KSKNAFPDPL…FDAIIEDYHS (85 aa). Residue 68-72 participates in substrate binding; it reads GVGVY. The Phosphagen kinase C-terminal 1 domain maps to 123-362; it reads YIRSTRIRVA…KALMELEKEA (240 aa). ATP contacts are provided by residues 126–130 and His189; that span reads STRIR. Substrate is bound at residue Glu229. Arg233 is a binding site for ATP. Cys275 is a binding site for substrate. ATP-binding positions include 284 to 288 and 312 to 317; these read RASVH and RGIHGE. Substrate is bound at residue Glu317. Residues 365-447 enclose the Phosphagen kinase N-terminal 2 domain; the sequence is KKRSVFPEVL…FDKIVEDYHS (83 aa). The 240-residue stretch at 475–714 folds into the Phosphagen kinase C-terminal 2 domain; sequence YIRSTRIRVA…KKLLEIEKST (240 aa).

Belongs to the ATP:guanido phosphotransferase family. In terms of assembly, monomer.

It catalyses the reaction L-arginine + ATP = N(omega)-phospho-L-arginine + ADP + H(+). This chain is Arginine kinase, found in Anthopleura japonica (Sea anemone).